The sequence spans 516 residues: UDP-N-acetylmuramyl-tripeptide synthetase (516 aa).

Serine 36 contacts UDP-N-acetyl-alpha-D-muramoyl-L-alanyl-D-glutamate. Glycine 113 to threonine 119 serves as a coordination point for ATP. UDP-N-acetyl-alpha-D-muramoyl-L-alanyl-D-glutamate contacts are provided by residues threonine 159 to threonine 160, serine 186, and arginine 194. Lysine 228 bears the N6-carboxylysine mark.

Belongs to the MurCDEF family. MurE subfamily. In terms of processing, carboxylation is probably crucial for Mg(2+) binding and, consequently, for the gamma-phosphate positioning of ATP.

It localises to the cytoplasm. It functions in the pathway cell wall biogenesis; peptidoglycan biosynthesis. In terms of biological role, catalyzes the addition of an amino acid to the nucleotide precursor UDP-N-acetylmuramoyl-L-alanyl-D-glutamate (UMAG) in the biosynthesis of bacterial cell-wall peptidoglycan. The chain is UDP-N-acetylmuramyl-tripeptide synthetase from Limosilactobacillus reuteri (strain DSM 20016) (Lactobacillus reuteri).